Reading from the N-terminus, the 527-residue chain is Palmitoleoyl-protein carboxylesterase NOTUM (527 aa).

The first 19 residues, Met1 to Gly19, serve as a signal peptide directing secretion. Residues Asn64, Asn86, and Asn104 are each glycosylated (N-linked (GlcNAc...) asparagine). The Charge relay system role is filled by Ser203. A glycan (N-linked (GlcNAc...) asparagine) is linked at Asn249. Catalysis depends on charge relay system residues Asp311 and His359. Residue Asn451 is glycosylated (N-linked (GlcNAc...) asparagine).

It belongs to the pectinacetylesterase family. Notum subfamily. As to expression, expressed in the anterior pole.

It is found in the secreted. It catalyses the reaction [Wnt protein]-O-(9Z)-hexadecenoyl-L-serine + H2O = [Wnt protein]-L-serine + (9Z)-hexadecenoate + H(+). Its function is as follows. Carboxylesterase that acts as a key negative regulator of the Wnt signaling pathway. Acts by specifically mediating depalmitoleoylation of WNT proteins. Serine palmitoleoylation of WNT proteins is required for efficient binding to frizzled receptors. Promotes head regeneration following amputation by inhibiting the Wnt signaling pathway. The polypeptide is Palmitoleoyl-protein carboxylesterase NOTUM (Schmidtea mediterranea (Freshwater planarian flatworm)).